The primary structure comprises 124 residues: Protein MGF 110-4L (124 aa).

The N-terminal stretch at 1–28 (MLVIFLGILGLLANQVLGLPTQAGGHLR) is a signal peptide. N-linked (GlcNAc...) asparagine; by host glycosylation is present at Asn64. The Prevents secretion from ER signature appears at 121–124 (KEDL).

Belongs to the asfivirus MGF 110 family.

Its subcellular location is the virion. The protein localises to the host endoplasmic reticulum-Golgi intermediate compartment. Causes the redistribution of lumenal ER protein to an enlarged ERGIC compartment. This African swine fever virus (strain Badajoz 1971 Vero-adapted) (Ba71V) protein is Protein MGF 110-4L.